The primary structure comprises 96 residues: Small ribosomal subunit protein bS20 (96 aa).

Positions 1 to 27 (MAKQEVAAKKVKRPTALKRDLQNKKKR) are disordered.

This sequence belongs to the bacterial ribosomal protein bS20 family.

Functionally, binds directly to 16S ribosomal RNA. In Protochlamydia amoebophila (strain UWE25), this protein is Small ribosomal subunit protein bS20.